Here is a 325-residue protein sequence, read N- to C-terminus: Fructose-1,6-bisphosphatase class 1 (325 aa).

Mg(2+) is bound by residues glutamate 84, aspartate 103, leucine 105, and aspartate 106. Substrate contacts are provided by residues 106 to 109 (DGSS), asparagine 196, and lysine 262. Mg(2+) is bound at residue glutamate 268.

The protein belongs to the FBPase class 1 family. Homotetramer. Mg(2+) is required as a cofactor.

Its subcellular location is the cytoplasm. The catalysed reaction is beta-D-fructose 1,6-bisphosphate + H2O = beta-D-fructose 6-phosphate + phosphate. Its pathway is carbohydrate biosynthesis; gluconeogenesis. This is Fructose-1,6-bisphosphatase class 1 from Shewanella baltica (strain OS195).